The chain runs to 34 residues: Photosystem II reaction center protein M (34 aa).

Residues 5-25 form a helical membrane-spanning segment; it reads ILAFIATALFILVPTAFLLII.

It belongs to the PsbM family. In terms of assembly, PSII is composed of 1 copy each of membrane proteins PsbA, PsbB, PsbC, PsbD, PsbE, PsbF, PsbH, PsbI, PsbJ, PsbK, PsbL, PsbM, PsbT, PsbX, PsbY, PsbZ, Psb30/Ycf12, at least 3 peripheral proteins of the oxygen-evolving complex and a large number of cofactors. It forms dimeric complexes.

It localises to the plastid. The protein localises to the chloroplast thylakoid membrane. In terms of biological role, one of the components of the core complex of photosystem II (PSII). PSII is a light-driven water:plastoquinone oxidoreductase that uses light energy to abstract electrons from H(2)O, generating O(2) and a proton gradient subsequently used for ATP formation. It consists of a core antenna complex that captures photons, and an electron transfer chain that converts photonic excitation into a charge separation. This subunit is found at the monomer-monomer interface. This is Photosystem II reaction center protein M from Cucumis sativus (Cucumber).